Here is a 282-residue protein sequence, read N- to C-terminus: MEMO1 family protein Msed_2139 (282 aa).

The protein belongs to the MEMO1 family.

The protein is MEMO1 family protein Msed_2139 of Metallosphaera sedula (strain ATCC 51363 / DSM 5348 / JCM 9185 / NBRC 15509 / TH2).